The sequence spans 142 residues: Large ribosomal subunit protein bL17 (142 aa).

This sequence belongs to the bacterial ribosomal protein bL17 family. In terms of assembly, part of the 50S ribosomal subunit. Contacts protein L32.

This is Large ribosomal subunit protein bL17 from Methylocella silvestris (strain DSM 15510 / CIP 108128 / LMG 27833 / NCIMB 13906 / BL2).